Here is a 241-residue protein sequence, read N- to C-terminus: MGHHLKRVVSPKSWGIPRKTDKFVTKTSPGPHNKNALPIVVWARDQMGIVRNMKEAKHVLREREIIVNGRPVRHPDMGIGIFDIVSIPKSGKHYRILRDKKGRHVTIPIDEDAASSRLVKITNKTIVKGGRIQLNLRDGSNVLTDKQYKSGDSIVLSLKEGQKNEIIDHFPFQPGNMAMIIGGKHSGVVGRIIEHIPVPGSLPNRVILKDESSGESFETIDEYVVMVGRESPAIDRWGIEE.

The S4 RNA-binding domain maps to 37–100 (LPIVVWARDQ…GKHYRILRDK (64 aa)).

Belongs to the eukaryotic ribosomal protein eS4 family.

This is Small ribosomal subunit protein eS4 from Methanospirillum hungatei JF-1 (strain ATCC 27890 / DSM 864 / NBRC 100397 / JF-1).